The chain runs to 50 residues: uncharacterized protein (50 aa).

This is an uncharacterized protein from Dictyostelium discoideum (Social amoeba).